The primary structure comprises 213 residues: Kynurenine formamidase (213 aa).

Trp-18 serves as a coordination point for substrate. Residues His-48, His-52, and Asp-54 each coordinate Zn(2+). His-58 functions as the Proton donor/acceptor in the catalytic mechanism. Positions 160 and 172 each coordinate Zn(2+).

The protein belongs to the Cyclase 1 superfamily. KynB family. Homodimer. Requires Zn(2+) as cofactor.

It catalyses the reaction N-formyl-L-kynurenine + H2O = L-kynurenine + formate + H(+). The protein operates within amino-acid degradation; L-tryptophan degradation via kynurenine pathway; L-kynurenine from L-tryptophan: step 2/2. Its function is as follows. Catalyzes the hydrolysis of N-formyl-L-kynurenine to L-kynurenine, the second step in the kynurenine pathway of tryptophan degradation. The sequence is that of Kynurenine formamidase from Burkholderia lata (strain ATCC 17760 / DSM 23089 / LMG 22485 / NCIMB 9086 / R18194 / 383).